The sequence spans 1824 residues: Afadin (1824 aa).

A Ras-associating 1 domain is found at 39 to 133 (FHGVMRFYFQ…GRFVLKNEND (95 aa)). The tract at residues 128–194 (LKNENDAIPP…DRPFQGEDVE (67 aa)) is disordered. Residues 146 to 185 (EKQEKEGVIQNFKRTLSKKEKKEKKKREKEALRQASDKDD) adopt a coiled-coil conformation. Positions 160-172 (TLSKKEKKEKKKR) are enriched in basic residues. Over residues 173–189 (EKEALRQASDKDDRPFQ) the composition is skewed to basic and acidic residues. 3 positions are modified to phosphoserine: S216, S246, and S256. In terms of domain architecture, Ras-associating 2 spans 246 to 348 (SGGTLRIYAD…LVFQLKRRPP (103 aa)). A compositionally biased stretch (basic and acidic residues) spans 349–371 (DHIPKKTKKHLEGKTPKGKERAD). The tract at residues 349–378 (DHIPKKTKKHLEGKTPKGKERADGSGYGST) is disordered. Phosphoserine occurs at positions 391 and 424. The FHA domain occupies 426–492 (TEVGTEKLDD…LQSGMKVQFG (67 aa)). A phosphoserine mark is found at S512, S557, S562, S589, and S655. Residues 534-595 (FDLGGDIHSG…RQESRTQDAS (62 aa)) form a disordered region. The span at 580 to 591 (QQPDYRRQESRT) shows a compositional bias: basic and acidic residues. The 241-residue stretch at 668–908 (NKMVSMMEGV…IENVVTVAEN (241 aa)) folds into the Dilute domain. A PDZ domain is found at 1007–1093 (IITVTLKKQN…VVTLEVAKQG (87 aa)). Phosphoserine is present on residues S1083, S1107, S1126, S1140, S1143, S1172, S1173, S1182, and S1199. The interval 1107–1223 (SPMMQRISDR…PRPEAYPIPT (117 aa)) is disordered. Residues 1113–1128 (ISDRRGSGKPRPKSEG) are compositionally biased toward basic and acidic residues. Over residues 1132-1143 (YNNSTQNGSPES) the composition is skewed to polar residues. Residues 1152–1172 (SEPKKLPGDDRLMKNRADHRS) show a composition bias toward basic and acidic residues. The segment covering 1190 to 1210 (ASGTTAKITSVSTGNLCTEEQ) has biased composition (polar residues). 2 positions are modified to phosphothreonine: T1211 and T1232. Disordered regions lie at residues 1235–1473 (ASKS…LQRP), 1501–1528 (SKEE…EKQQ), and 1569–1824 (RLQE…LNTK). A Phosphoserine modification is found at S1238. Composition is skewed to basic and acidic residues over residues 1252-1262 (YEEKPHMHTDS) and 1274-1302 (RSQE…KSDS). A Phosphoserine modification is found at S1275. A compositionally biased stretch (low complexity) spans 1309–1318 (SSSLDSSTSS). Residues 1325-1337 (SSKSVTPASTLTK) are compositionally biased toward polar residues. Residue S1328 is modified to Phosphoserine. The residue at position 1330 (T1330) is a Phosphothreonine. Positions 1345 to 1356 (TPAAIPATPVAV) are enriched in low complexity. Residues 1364 to 1373 (LPPPPPPPPV) are compositionally biased toward pro residues. Over residues 1407 to 1441 (AERRKREEHQRWYEKEKARLEEERERKRREQERKL) the composition is skewed to basic and acidic residues. A coiled-coil region spans residues 1408–1448 (ERRKREEHQRWYEKEKARLEEERERKRREQERKLGQMRTQS). 2 positions are modified to phosphoserine: S1501 and S1512. Over residues 1515-1528 (PWKRDAKEKLEKQQ) the composition is skewed to basic and acidic residues. Positions 1523–1667 (KLEKQQQMHI…SRLEAERRRQ (145 aa)) form a coiled coil. Residues 1578-1589 (EDDEEEEDDDVD) show a composition bias toward acidic residues. Basic and acidic residues predominate over residues 1597–1677 (LEAERRARLQ…HDEAARRLLE (81 aa)). Positions 1694-1709 (PPSPSPAPGAPPPPPQ) are enriched in pro residues. Phosphoserine is present on residues S1696, S1721, S1774, S1779, and S1799. The segment covering 1762–1776 (DACRDAKEKRSKSQD) has biased composition (basic and acidic residues). K1807 carries the post-translational modification N6-acetyllysine. A compositionally biased stretch (basic and acidic residues) spans 1813-1824 (KLTELENELNTK).

In terms of assembly, homodimer. Interacts with F-actin, nectin and NECTIN3. Essential for the association of nectin and E-cadherin. Isoform 1/s-afadin does not interact with F-actin. Interacts with ZO-1 and occludin, but probably in an indirect manner. Interacts with RIT1 and RIT2. Interacts with NRXN1 and BCR. Interacts with ADAM10; the interaction locks ADAM10 at adherens junctions following ADAM10 recruitment to adherens junctions by TSPAN33.

The protein resides in the cell junction. Its subcellular location is the adherens junction. Functionally, belongs to an adhesion system, probably together with the E-cadherin-catenin system, which plays a role in the organization of homotypic, interneuronal and heterotypic cell-cell adherens junctions (AJs). Nectin- and actin-filament-binding protein that connects nectin to the actin cytoskeleton. May play a key role in the organization of epithelial structures of the embryonic ectoderm. Essential for the organization of adherens junctions. This chain is Afadin, found in Homo sapiens (Human).